Consider the following 605-residue polypeptide: Elongation factor 4 (605 aa).

The tr-type G domain maps to 5–187 (ALIRNFSIIA…AVVERIPPPK (183 aa)). Residues 17 to 22 (DHGKST) and 134 to 137 (NKID) contribute to the GTP site.

The protein belongs to the TRAFAC class translation factor GTPase superfamily. Classic translation factor GTPase family. LepA subfamily.

It is found in the cell inner membrane. It catalyses the reaction GTP + H2O = GDP + phosphate + H(+). Required for accurate and efficient protein synthesis under certain stress conditions. May act as a fidelity factor of the translation reaction, by catalyzing a one-codon backward translocation of tRNAs on improperly translocated ribosomes. Back-translocation proceeds from a post-translocation (POST) complex to a pre-translocation (PRE) complex, thus giving elongation factor G a second chance to translocate the tRNAs correctly. Binds to ribosomes in a GTP-dependent manner. This Novosphingobium aromaticivorans (strain ATCC 700278 / DSM 12444 / CCUG 56034 / CIP 105152 / NBRC 16084 / F199) protein is Elongation factor 4.